Consider the following 672-residue polypeptide: Transketolase (672 aa).

His-35 contacts substrate. Thiamine diphosphate is bound by residues His-75 and 124–126 (GPL). A Mg(2+)-binding site is contributed by Asp-162. Gly-163 and Asn-192 together coordinate thiamine diphosphate. Mg(2+) is bound by residues Asn-192 and Ile-194. Substrate-binding residues include His-266, Arg-361, and Ser-388. His-266 contacts thiamine diphosphate. Catalysis depends on Glu-415, which acts as the Proton donor. Position 441 (Phe-441) interacts with thiamine diphosphate. Residues His-465, Asp-473, and Arg-524 each contribute to the substrate site.

It belongs to the transketolase family. As to quaternary structure, homodimer. Mg(2+) serves as cofactor. Requires Ca(2+) as cofactor. The cofactor is Mn(2+). Co(2+) is required as a cofactor. It depends on thiamine diphosphate as a cofactor.

It catalyses the reaction D-sedoheptulose 7-phosphate + D-glyceraldehyde 3-phosphate = aldehydo-D-ribose 5-phosphate + D-xylulose 5-phosphate. It participates in carbohydrate biosynthesis; Calvin cycle. It functions in the pathway carbohydrate degradation; pentose phosphate pathway. In terms of biological role, catalyzes the transfer of a two-carbon ketol group from a ketose donor to an aldose acceptor, via a covalent intermediate with the cofactor thiamine pyrophosphate. The chain is Transketolase (tktA) from Rhodobacter capsulatus (strain ATCC BAA-309 / NBRC 16581 / SB1003).